A 743-amino-acid chain; its full sequence is MSAPAADHNAAKPIPHVPQASRRYKNSYNGFVYNIHTWLYDVSVFLFNILFTIFFREIKVRGAYNVPEVGVPTILVCAPHANQFIDPALVMSQTRLLKTSAGKSRSRMPCFVTAESSFKKRFISFFGHAMGGIPVPRIQDNLKPVDENLEIYAPDLKNHPEIIKGRSKNPQTTPVNFTKRFSAKSLLGLPDYLSNAQIKEIPDDETIILSSPFRTSKSKVVELLTNGTNFKYAEKIDNTETFQSVFDHLHTKGCVGIFPEGGSHDRPSLLPIKAGVAIMALGAVAADPTMKVAVVPCGLHYFHRNKFRSRAVLEYGEPIVVDGKYGEMYKDSPRETVSKLLKKITNSLFSVTENAPDYDTLMVIQAARRLYQPVKVRLPLPAIVEINRRLLFGYSKFKDDPRIIHLKKLVYDYNRKLDSVGLKDHQVMQLKTTKLEALRCFVTLIVRLIKFSVFAILSLPGSILFTPIFIICRVYSEKKAKEGLKKSLVKIKGTDLLATWKLIVALILAPILYVTYSILLIILARKQHYCRIWVPSNNAFIQFVYFYALLVFTTYSSLKTGEIGVDLFKSLRPLFVSIVYPGKKIEEIQTTRKNLSLELTAVCNDLGPLVFPDYDKLATEIFSKRDGYDVSSDAESSISRMSVQSRSRSSSIHSIGSLASNALSRVNSRGSLTDIPIFSDAKQGQWKSEGETSEDEDEFDEKNPAIVQTARSSDLNKENSRNTNISSKIASLVRQKREHEKKE.

The Lumenal segment spans residues 1-34 (MSAPAADHNAAKPIPHVPQASRRYKNSYNGFVYN). A helical transmembrane segment spans residues 35-55 (IHTWLYDVSVFLFNILFTIFF). At 56 to 442 (REIKVRGAYN…TKLEALRCFV (387 aa)) the chain is on the cytoplasmic side. Residues 443-457 (TLIVRLIKFSVFAIL) form a helical membrane-spanning segment. Position 458 (serine 458) is a topological domain, lumenal. A helical membrane pass occupies residues 459-473 (LPGSILFTPIFIICR). Residues 474–501 (VYSEKKAKEGLKKSLVKIKGTDLLATWK) lie on the Cytoplasmic side of the membrane. The chain crosses the membrane as a helical span at residues 502 to 522 (LIVALILAPILYVTYSILLII). The Lumenal segment spans residues 523–531 (LARKQHYCR). A helical membrane pass occupies residues 532–552 (IWVPSNNAFIQFVYFYALLVF). At 553–743 (TTYSSLKTGE…RQKREHEKKE (191 aa)) the chain is on the cytoplasmic side. Phosphoserine is present on residues serine 632, serine 637, serine 647, serine 651, serine 654, serine 657, serine 664, serine 668, and serine 671. Residue threonine 673 is modified to Phosphothreonine. The tract at residues 682–743 (KQGQWKSEGE…RQKREHEKKE (62 aa)) is disordered. Serine 688 is subject to Phosphoserine. Residues 691 to 700 (ETSEDEDEFD) are compositionally biased toward acidic residues. At threonine 692 the chain carries Phosphothreonine. Position 693 is a phosphoserine (serine 693).

Belongs to the GPAT/DAPAT family. In terms of processing, phosphorylated at a conserved motif involving Ser-664, Ser-668 and Ser-671. This phosphorylation plays a critical role for efficient TAG mobilization. Phosphorylation deficiency at this motif increases the enzyme activity and consequently induces de novo formation of phosphatidic acid.

It localises to the lipid droplet. The protein localises to the endoplasmic reticulum membrane. The enzyme catalyses sn-glycerol 3-phosphate + an acyl-CoA = a 1-acyl-sn-glycero-3-phosphate + CoA. It carries out the reaction dihydroxyacetone phosphate + an acyl-CoA = a 1-acylglycerone 3-phosphate + CoA. The catalysed reaction is sn-glycerol 3-phosphate + hexadecanoyl-CoA = 1-hexadecanoyl-sn-glycero-3-phosphate + CoA. It catalyses the reaction (9Z)-hexadecenoyl-CoA + sn-glycerol 3-phosphate = 1-(9Z-hexadecenoyl)-sn-glycero-3-phosphate + CoA. The enzyme catalyses sn-glycerol 3-phosphate + octadecanoyl-CoA = 1-octadecanoyl-sn-glycero-3-phosphate + CoA. It carries out the reaction sn-glycerol 3-phosphate + (9Z)-octadecenoyl-CoA = 1-(9Z-octadecenoyl)-sn-glycero-3-phosphate + CoA. It participates in phospholipid metabolism; CDP-diacylglycerol biosynthesis; CDP-diacylglycerol from sn-glycerol 3-phosphate: step 1/3. In terms of biological role, dual substrate-specific glycerol-3-phosphate/dihydroxyacetone phosphate sn-1 acyltransferase, catalyzing the first and committed reaction in the de novo synthesis of glycerophospholipids and triacylglycerols (TAGs). Can use both Gly-3-P and dihydroxyacetone phosphate with similar efficiencies and has a broad fatty acyl-CoA specificity profile. Transfers a fatty acid from fatty acyl-CoA to the sn-1 position of glycerol-3-phosphate to produce lysophosphatidic acid (LysoPA). These lipids not only are precursors of glycerolipids, but also are dynamic components of signal transduction systems that control cell physiology. The protein is Glycerol-3-phosphate O-acyltransferase 2 (GPT2) of Saccharomyces cerevisiae (strain ATCC 204508 / S288c) (Baker's yeast).